A 248-amino-acid polypeptide reads, in one-letter code: Cutinase cut1 (248 aa).

The first 17 residues, methionine 1 to alanine 17, serve as a signal peptide directing secretion. Cysteine 79 and cysteine 153 form a disulfide bridge. Residue serine 164 is the Nucleophile of the active site. Cysteine 212 and cysteine 219 are oxidised to a cystine. Aspartate 216 is a catalytic residue. Histidine 229 (proton donor/acceptor) is an active-site residue.

This sequence belongs to the cutinase family. Post-translationally, the 2 disulfide bonds play a critical role in holding the catalytic residues in juxta-position; reduction of the disulfide bridges results in the complete inactivation of the enzyme.

Its subcellular location is the secreted. The enzyme catalyses cutin + H2O = cutin monomers.. Functionally, catalyzes the hydrolysis of complex carboxylic polyesters found in the cell wall of plants. May degrade cutin, a macromolecule that forms the structure of the plant cuticle. May also degrade suberin, a specialized macromolecule found in the cell wall of various plant tissues. In Trichoderma harzianum (Hypocrea lixii), this protein is Cutinase cut1.